The primary structure comprises 652 residues: Set1 complex component ash2 (652 aa).

Residues 1–32 (MLAHGSNDYGVSLKGNKTGSSPSKASSLNWNE) are disordered. A compositionally biased stretch (polar residues) spans 15–32 (GNKTGSSPSKASSLNWNE). Residues 40–94 (NTYCYCGKDRNLRFPDLQCSVCLNMFHLSCLSPPCTSMMGFSTNYQFVCKHCTED) form a PHD-type zinc finger. 8 residues coordinate Zn(2+): cysteine 43, cysteine 45, cysteine 58, cysteine 61, histidine 66, cysteine 69, cysteine 88, and cysteine 91. The tract at residues 234 to 270 (RLVETETPPPSSSKLKEDYKDSKREMKRSNTPWSNAS) is disordered. A compositionally biased stretch (basic and acidic residues) spans 247-261 (KLKEDYKDSKREMKR). A B30.2/SPRY domain is found at 330–519 (EAAKDLPNVM…KHNRYIDLPY (190 aa)).

Belongs to the cclA family. As to quaternary structure, component of the Set1 complex composed of ash2, sdc1, set1, shg1, spp1, swd1, swd2 and swd3. Component of the Lid2 complex composed of ash2, jmj3, lid2, sdc1 and snt2.

It is found in the nucleus. Its function is as follows. Component of the COMPASS (Set1C) complex that specifically mono-, di- and trimethylates histone H3 to form H3K4me1/2/3, which subsequently plays a role in telomere length maintenance and transcription elongation regulation. Regulates MAPK pathway and sporulation through H3K4 methylation. The polypeptide is Set1 complex component ash2 (Schizosaccharomyces pombe (strain 972 / ATCC 24843) (Fission yeast)).